The sequence spans 354 residues: Trans-enoyl reductase pydC (354 aa).

Residues 16-342 (ANTDPVTFEI…RREVSGEKIV (327 aa)) form the Enoyl reductase (ER) domain. Residues 51–54 (CDYK), 180–183 (SPKN), tyrosine 198, 245–246 (FE), and 336–337 (VS) each bind NADP(+).

This sequence belongs to the zinc-containing alcohol dehydrogenase family. In terms of assembly, monomer.

It participates in mycotoxin biosynthesis. Its function is as follows. Trans-enoyl reductase; part of the gene cluster that mediates the biosynthesis of pyrrocidines, fungal natural products containing a macrocyclic para-cyclophane connected to a decahydrofluorene ring system that show potent antibiotic activities toward Gram-negative bacteria. Within the pathway, the PKS-NRPS pydA, with the help of the trans-enoyl reductase pydC, synthesize the polyketide-tyrosyl acyl thioester product which can be reductively off-loaded by the terminal reductase (R) domain in pydA. The PKS module of pydA acts in combination with the trans-acting enoyl reductase pydC to produce a methylated polyketide attached to the ACP domain. In parallel, the adenylation (A) domain of the NRPS module activated L-tyrosine, which is then transferred to the ACP domain. The condensation (C) domain subsequently link this group to the polyketide chain, forming an enzyme-bound amide. The alpha/beta hydrolase pydG is then required to catalyze the subsequent Knoevenagel condensation that affords the 3-pyrrolin-2-one ring, whereas the four proteins pydB, pydE, pydX and pydZ then function synergistically to form the cyclophane. PydB and the membrane-bound pydX and pydZ are lipid-binding proteins that can sequester and mold the pdyG product into the inverse S-shape. Binding of the medium chain reductase pydE to the complex would trigger the cascade oxidative cyclization. PydY is involved in the Diels-Alder cycloaddition that forms the decahydrofluorene core. Additional non-enzymatic hydroxylation yields pyrrocidine A2 which can be further reduced into pyrrocidine B by an endogenous reductase. The protein is Trans-enoyl reductase pydC of Acremonium sp.